Reading from the N-terminus, the 260-residue chain is 3'-5' ssDNA/RNA exonuclease TatD (260 aa).

The a divalent metal cation site is built by glutamate 91, histidine 127, and histidine 152.

This sequence belongs to the metallo-dependent hydrolases superfamily. TatD-type hydrolase family. TatD subfamily. In terms of assembly, monomer. The cofactor is Mg(2+).

Its subcellular location is the cytoplasm. In terms of biological role, 3'-5' exonuclease that prefers single-stranded DNA and RNA. May play a role in the H(2)O(2)-induced DNA damage repair. The sequence is that of 3'-5' ssDNA/RNA exonuclease TatD from Enterobacter lignolyticus (strain SCF1).